The following is a 197-amino-acid chain: Probable chemoreceptor glutamine deamidase CheD 2 (197 aa).

Belongs to the CheD family.

The catalysed reaction is L-glutaminyl-[protein] + H2O = L-glutamyl-[protein] + NH4(+). Functionally, probably deamidates glutamine residues to glutamate on methyl-accepting chemotaxis receptors (MCPs), playing an important role in chemotaxis. In Dechloromonas aromatica (strain RCB), this protein is Probable chemoreceptor glutamine deamidase CheD 2.